The sequence spans 344 residues: L-rhamnose-proton symporter (344 aa).

Transmembrane regions (helical) follow at residues 4 to 24 (AITM…CFYA), 38 to 58 (WSVG…ALLL), 68 to 88 (FSLS…IGNI), 101 to 121 (MGIG…TPII), 137 to 157 (TLLG…AGQL), 175 to 195 (LVLA…MNAA), 214 to 234 (LPSY…FCFI), 259 to 279 (VLLS…YAWG), 290 to 310 (ISWM…GLVL), and 323 to 343 (VLSL…IGMA).

The protein belongs to the L-rhamnose transporter (TC 2.A.7.6) family.

It is found in the cell inner membrane. The catalysed reaction is L-rhamnopyranose(in) + H(+)(in) = L-rhamnopyranose(out) + H(+)(out). Uptake of L-rhamnose across the cytoplasmic membrane with the concomitant transport of protons into the cell (symport system). The polypeptide is L-rhamnose-proton symporter (Escherichia coli O1:K1 / APEC).